We begin with the raw amino-acid sequence, 86 residues long: Muscarinic toxin MTX6 (86 aa).

The first 21 residues, 1 to 21 (MKTLLLTLVVVTILCLDLGYT), serve as a signal peptide directing secretion. 4 cysteine pairs are disulfide-bonded: Cys-24-Cys-45, Cys-38-Cys-63, Cys-67-Cys-78, and Cys-79-Cys-84.

It belongs to the three-finger toxin family. Short-chain subfamily. Aminergic toxin sub-subfamily. Monomer. Expressed by the venom gland.

It localises to the secreted. Its function is as follows. Binds to the muscarinic acetylcholine receptor (CHRM). The polypeptide is Muscarinic toxin MTX6 (Ophiophagus hannah (King cobra)).